A 324-amino-acid chain; its full sequence is MYG1 protein C694.04c (324 aa).

Belongs to the MYG1 family.

This is MYG1 protein C694.04c from Schizosaccharomyces pombe (strain 972 / ATCC 24843) (Fission yeast).